The following is a 20-amino-acid chain: Thylakoid lumenal 22 kDa protein (20 aa).

The protein resides in the plastid. It is found in the chloroplast thylakoid lumen. This chain is Thylakoid lumenal 22 kDa protein, found in Spinacia oleracea (Spinach).